The sequence spans 47 residues: uncharacterized protein (47 aa).

Residues 1-25 (MAHKCASAKLLSGIMALLFNGKSLL) form the signal peptide.

This is an uncharacterized protein from Saccharomyces cerevisiae (strain ATCC 204508 / S288c) (Baker's yeast).